A 445-amino-acid polypeptide reads, in one-letter code: MNMMAKFQMSRIDLRNRVLSAAQLRSALPRGGVDVDAVVPKVRPIVDAVAQRGAQAALEYGESFDGIRPETVRVPRELLSQALENLDADVRAALQVSIDRARAVHADQRRTDTTTTLAPGATVTERWVPVERVGLYVPGGNAVYPSSVVMNVVPAQTAGVDSMVIASPPQGQFGGRPHPTILAAAALLGVDEVWAVGGAQAVALLAYGGTDTDGAELAPVDMITGPGNIYVTAAKRICRSQVGIDAEAGPTEIAILADHTADPVHVAADLISQAEHDEMAASVLVTDSETLAEATDRELANQLATTKHVERVTAALSGKQSAIVLVDDIDAGVRTVNAYAAEHLEIQTVDAPGVAGRIRSAGAIFVGAWSPVSLGDYCAGSNHVLPTAGCARHSSGLSVQTFLRGIHVVEYDEAALKDVSGHVITLSKAEDLPAHGEAVRRRFER.

Tyrosine 136, glutamine 200, and asparagine 228 together coordinate NAD(+). Threonine 251, glutamine 273, and histidine 276 together coordinate substrate. Glutamine 273 and histidine 276 together coordinate Zn(2+). Active-site proton acceptor residues include glutamate 342 and histidine 343. Substrate contacts are provided by histidine 343, aspartate 376, glutamate 430, and histidine 435. Aspartate 376 contributes to the Zn(2+) binding site. Histidine 435 is a binding site for Zn(2+).

Belongs to the histidinol dehydrogenase family. It depends on Zn(2+) as a cofactor.

The catalysed reaction is L-histidinol + 2 NAD(+) + H2O = L-histidine + 2 NADH + 3 H(+). Its pathway is amino-acid biosynthesis; L-histidine biosynthesis; L-histidine from 5-phospho-alpha-D-ribose 1-diphosphate: step 9/9. Its function is as follows. Catalyzes the sequential NAD-dependent oxidations of L-histidinol to L-histidinaldehyde and then to L-histidine. The chain is Histidinol dehydrogenase (hisD) from Mycolicibacterium smegmatis (Mycobacterium smegmatis).